Here is a 209-residue protein sequence, read N- to C-terminus: Uracil phosphoribosyltransferase (209 aa).

5-phospho-alpha-D-ribose 1-diphosphate-binding positions include R79, R104, and 131 to 139 (DPMLATGGS). Uracil is bound by residues I194 and 199-201 (GDA). D200 serves as a coordination point for 5-phospho-alpha-D-ribose 1-diphosphate.

This sequence belongs to the UPRTase family. It depends on Mg(2+) as a cofactor.

It catalyses the reaction UMP + diphosphate = 5-phospho-alpha-D-ribose 1-diphosphate + uracil. It participates in pyrimidine metabolism; UMP biosynthesis via salvage pathway; UMP from uracil: step 1/1. With respect to regulation, allosterically activated by GTP. Functionally, catalyzes the conversion of uracil and 5-phospho-alpha-D-ribose 1-diphosphate (PRPP) to UMP and diphosphate. This is Uracil phosphoribosyltransferase from Bacillus pumilus (strain SAFR-032).